We begin with the raw amino-acid sequence, 33 residues long: MIFQIGWAALAAIFTFSIAMVVWGRNGDGSIDI.

The helical transmembrane segment at isoleucine 2 to valine 22 threads the bilayer.

It belongs to the PetN family. The 4 large subunits of the cytochrome b6-f complex are cytochrome b6, subunit IV (17 kDa polypeptide, PetD), cytochrome f and the Rieske protein, while the 4 small subunits are PetG, PetL, PetM and PetN. The complex functions as a dimer.

Its subcellular location is the cellular thylakoid membrane. In terms of biological role, component of the cytochrome b6-f complex, which mediates electron transfer between photosystem II (PSII) and photosystem I (PSI), cyclic electron flow around PSI, and state transitions. The polypeptide is Cytochrome b6-f complex subunit 8 (Prochlorococcus marinus (strain MIT 9301)).